A 427-amino-acid chain; its full sequence is Enolase (427 aa).

Gln162 contacts (2R)-2-phosphoglycerate. Glu204 serves as the catalytic Proton donor. Asp241, Glu284, and Asp311 together coordinate Mg(2+). (2R)-2-phosphoglycerate is bound by residues Lys336, Arg365, Ser366, and Lys387. Catalysis depends on Lys336, which acts as the Proton acceptor.

Belongs to the enolase family. Requires Mg(2+) as cofactor.

It is found in the cytoplasm. Its subcellular location is the secreted. It localises to the cell surface. The enzyme catalyses (2R)-2-phosphoglycerate = phosphoenolpyruvate + H2O. The protein operates within carbohydrate degradation; glycolysis; pyruvate from D-glyceraldehyde 3-phosphate: step 4/5. In terms of biological role, catalyzes the reversible conversion of 2-phosphoglycerate (2-PG) into phosphoenolpyruvate (PEP). It is essential for the degradation of carbohydrates via glycolysis. The protein is Enolase of Natranaerobius thermophilus (strain ATCC BAA-1301 / DSM 18059 / JW/NM-WN-LF).